Reading from the N-terminus, the 329-residue chain is Cathepsin K (329 aa).

Positions 1-15 are cleaved as a signal peptide; the sequence is MWGLKVLLLPVVSFA. The propeptide at 16–114 is activation peptide; the sequence is LYPEEILDTH…TLYIPEWEGR (99 aa). N-linked (GlcNAc...) asparagine glycosylation is present at N103. 3 disulfides stabilise this stretch: C136–C177, C170–C210, and C269–C318. Residue C139 is part of the active site. Residues H276 and N296 contribute to the active site.

It belongs to the peptidase C1 family. In terms of tissue distribution, predominantly expressed in osteoclasts (bones). Expressed in thyroid epithelial cells.

It is found in the lysosome. The protein localises to the secreted. Its subcellular location is the apical cell membrane. It catalyses the reaction Broad proteolytic activity. With small-molecule substrates and inhibitors, the major determinant of specificity is P2, which is preferably Leu, Met &gt; Phe, and not Arg.. Thiol protease involved in osteoclastic bone resorption and may participate partially in the disorder of bone remodeling. Displays potent endoprotease activity against fibrinogen at acid pH. May play an important role in extracellular matrix degradation. Involved in the release of thyroid hormone thyroxine (T4) by limited proteolysis of TG/thyroglobulin in the thyroid follicle lumen. This is Cathepsin K (CTSK) from Homo sapiens (Human).